We begin with the raw amino-acid sequence, 329 residues long: UPF0158 protein CT_429 (329 aa).

The tract at residues 292-329 is disordered; that stretch reads GYDSDGETGDFFDEEYDDEEEEIKPKKTTKRGRKKSRS. A compositionally biased stretch (acidic residues) spans 295–313; it reads SDGETGDFFDEEYDDEEEE. Residues 317-329 are compositionally biased toward basic residues; the sequence is KKTTKRGRKKSRS.

It belongs to the UPF0158 family.

In Chlamydia trachomatis serovar D (strain ATCC VR-885 / DSM 19411 / UW-3/Cx), this protein is UPF0158 protein CT_429.